The following is a 278-amino-acid chain: Ribosomal RNA small subunit methyltransferase A (278 aa).

Residues N28, L30, G55, E77, D103, and N122 each contribute to the S-adenosyl-L-methionine site.

It belongs to the class I-like SAM-binding methyltransferase superfamily. rRNA adenine N(6)-methyltransferase family. RsmA subfamily.

Its subcellular location is the cytoplasm. It carries out the reaction adenosine(1518)/adenosine(1519) in 16S rRNA + 4 S-adenosyl-L-methionine = N(6)-dimethyladenosine(1518)/N(6)-dimethyladenosine(1519) in 16S rRNA + 4 S-adenosyl-L-homocysteine + 4 H(+). Its function is as follows. Specifically dimethylates two adjacent adenosines (A1518 and A1519) in the loop of a conserved hairpin near the 3'-end of 16S rRNA in the 30S particle. May play a critical role in biogenesis of 30S subunits. In Cereibacter sphaeroides (strain ATCC 17029 / ATH 2.4.9) (Rhodobacter sphaeroides), this protein is Ribosomal RNA small subunit methyltransferase A.